Reading from the N-terminus, the 643-residue chain is Carboxy-terminal kinesin 2 (643 aa).

2 disordered regions span residues 1 to 42 (MDST…SSLE) and 81 to 101 (MRPKNSGPGITSTSFSGKTKV). Positions 1-116 (MDSTDKKVQV…QPAAIGAEKK (116 aa)) are globular. Residues 88–101 (PGITSTSFSGKTKV) show a composition bias toward polar residues. Residues 117-296 (KRAAWDLKGQ…LVQELKGNIR (180 aa)) adopt a coiled-coil conformation. One can recognise a Kinesin motor domain in the interval 294-633 (NIRVFCRVRP…LRFASKVNEC (340 aa)). Position 386 to 393 (386 to 393 (GQTGSGKT)) interacts with ATP.

This sequence belongs to the TRAFAC class myosin-kinesin ATPase superfamily. Kinesin family. NCD subfamily.

Its subcellular location is the cytoplasm. The protein localises to the cytoskeleton. In terms of biological role, promotes mitotic spindle assembly. The chain is Carboxy-terminal kinesin 2 from Xenopus laevis (African clawed frog).